Here is a 215-residue protein sequence, read N- to C-terminus: Peroxiredoxin (215 aa).

A Thioredoxin domain is found at 6–161; it reads PLIGEEFPRV…ILRAVKALQT (156 aa). The Cysteine sulfenic acid (-SOH) intermediate role is filled by cysteine 48. Arginine 124 contacts substrate. A disulfide bridge connects residues cysteine 205 and cysteine 211.

It belongs to the peroxiredoxin family. Prx6 subfamily. In terms of assembly, homodecamer. Pentamer of dimers that assemble into a ring structure.

The protein resides in the cytoplasm. The enzyme catalyses a hydroperoxide + [thioredoxin]-dithiol = an alcohol + [thioredoxin]-disulfide + H2O. In terms of biological role, thiol-specific peroxidase that catalyzes the reduction of hydrogen peroxide and organic hydroperoxides to water and alcohols, respectively. Plays a role in cell protection against oxidative stress by detoxifying peroxides. The chain is Peroxiredoxin from Thermotoga maritima (strain ATCC 43589 / DSM 3109 / JCM 10099 / NBRC 100826 / MSB8).